The sequence spans 300 residues: Acetyl-coenzyme A carboxylase carboxyl transferase subunit beta 2 (300 aa).

The CoA carboxyltransferase N-terminal domain maps to 26–294; the sequence is VWIKCPSCRE…ATAHKSEPIV (269 aa). Residues cysteine 30, cysteine 33, cysteine 49, and cysteine 51 each coordinate Zn(2+). The C4-type zinc-finger motif lies at 30-51; sequence CPSCRELIYHKQLAERMKVCRC.

The protein belongs to the AccD/PCCB family. As to quaternary structure, acetyl-CoA carboxylase is a heterohexamer composed of biotin carboxyl carrier protein (AccB), biotin carboxylase (AccC) and two subunits each of ACCase subunit alpha (AccA) and ACCase subunit beta (AccD). The cofactor is Zn(2+).

The protein localises to the cytoplasm. The catalysed reaction is N(6)-carboxybiotinyl-L-lysyl-[protein] + acetyl-CoA = N(6)-biotinyl-L-lysyl-[protein] + malonyl-CoA. It functions in the pathway lipid metabolism; malonyl-CoA biosynthesis; malonyl-CoA from acetyl-CoA: step 1/1. In terms of biological role, component of the acetyl coenzyme A carboxylase (ACC) complex. Biotin carboxylase (BC) catalyzes the carboxylation of biotin on its carrier protein (BCCP) and then the CO(2) group is transferred by the transcarboxylase to acetyl-CoA to form malonyl-CoA. In Roseiflexus sp. (strain RS-1), this protein is Acetyl-coenzyme A carboxylase carboxyl transferase subunit beta 2.